We begin with the raw amino-acid sequence, 447 residues long: Exodeoxyribonuclease 7 large subunit (447 aa).

The protein belongs to the XseA family. Heterooligomer composed of large and small subunits.

It localises to the cytoplasm. The enzyme catalyses Exonucleolytic cleavage in either 5'- to 3'- or 3'- to 5'-direction to yield nucleoside 5'-phosphates.. Functionally, bidirectionally degrades single-stranded DNA into large acid-insoluble oligonucleotides, which are then degraded further into small acid-soluble oligonucleotides. This Streptococcus mutans serotype c (strain ATCC 700610 / UA159) protein is Exodeoxyribonuclease 7 large subunit.